Reading from the N-terminus, the 78-residue chain is Protein SlyX homolog (78 aa).

This sequence belongs to the SlyX family.

This chain is Protein SlyX homolog, found in Xylella fastidiosa (strain M23).